A 481-amino-acid chain; its full sequence is Tripartite motif-containing protein 10 (481 aa).

Residues 16–61 (CPICQGTLREPVTIDCGHNFCRACLTRYCEIPGPDLEESPTCPLCK) form an RING-type zinc finger. The B box-type zinc finger occupies 94-135 (GEEDVCQEHGEKIYFFCEDDEMQLCVVCREAGEHATHTMRFL). Positions 99, 102, 121, and 127 each coordinate Zn(2+). Residues 150–177 (LKCLRKEREEIQEIQSRENKRMQVLLTQ) are a coiled coil. The B30.2/SPRY domain maps to 292 to 481 (REMKMFLEKL…GRGSSFSLSS (190 aa)).

Belongs to the TRIM/RBCC family. As to quaternary structure, interacts with IFNAR1; this interaction prevents association of IFNAR1 with TYK2.

The protein resides in the cytoplasm. Functionally, E3 ligase that plays an essential role in the differentiation and survival of terminal erythroid cells. May directly bind to PTEN and promote its ubiquitination, resulting in its proteasomal degradation and activation of hypertrophic signaling. In addition, plays a role in immune response regulation by repressing the phosphorylation of STAT1 and STAT2 in the interferon/JAK/STAT signaling pathway independent of its E3 ligase activity. Mechanistically, interacts with the intracellular domain of IFNAR1 and thereby inhibits the association between TYK2 and IFNAR1. The polypeptide is Tripartite motif-containing protein 10 (TRIM10) (Homo sapiens (Human)).